The sequence spans 3739 residues: Cardiomyopathy-associated protein 5 (3739 aa).

Disordered regions lie at residues 1-205 (MESG…PPIT), 268-814 (SLEP…SAFV), 835-884 (VSVS…AIQS), 967-1270 (LSED…SDVP), 1288-1313 (TQAS…RDAK), 1325-1637 (SSAL…NLVS), 1650-1969 (EMNR…EKGK), 1986-2016 (SSIP…AIEP), 2065-2246 (FLSN…WETR), 2273-2318 (AVGE…LALD), 2377-2498 (VYPE…SAVE), 2513-2532 (KKQE…TSKD), and 2579-2616 (SADG…SEDQ). A compositionally biased stretch (acidic residues) spans 18 to 47 (ADEEVAQELETEEESEGEGEETAAESEEEP). Residues 48 to 62 (DARLSDEDEEGKTKQ) are compositionally biased toward basic and acidic residues. The span at 84 to 106 (TWETNSSRSSTPWASGESQTSGI) shows a compositional bias: polar residues. Basic residues predominate over residues 130 to 153 (RTRKRTQKSKRGSPSLRRKGSKKR). Ser155 carries the post-translational modification Phosphoserine. Polar residues-rich tracts occupy residues 156 to 175 (LESQ…SESP) and 325 to 336 (ADSNLNVPSSTE). Positions 380–406 (ATMVLERAKEELEQNAQGKESSEDDAS) form a coiled coil. 3 stretches are compositionally biased toward basic and acidic residues: residues 479–637 (IVHR…REEE), 644–663 (SIVH…REEE), and 670–730 (SIVH…ERGV). Tandem repeats lie at residues 482 to 493 (REEEHAPEPIVH) and 494 to 505 (REEEHAPEPIVH). The segment at 482–720 (REEEHAPEPI…EEHAPEPMVH (239 aa)) is 20 X 12 AA approximate tandem repeats of R-[DE]-[EK]-[EG]-H-[AV]-P-E-[PS]-[IM]-V-[HLR]. One copy of the 3; approximate repeat lies at 506 to 519 (REEEHAPEPESIVH). Repeat 4 spans residues 520–531 (REEEHAPESIVH). A 5; approximate repeat occupies 532-545 (REEEHAPEPVPIVH). One copy of the 6; approximate repeat lies at 546-559 (REEEHAPEPESIVH). Tandem repeats lie at residues 560 to 571 (REEEHAPEPIVH), 572 to 583 (RDKGHALEPIVH), 584 to 595 (REEEHAPEPIVH), and 596 to 607 (RDEGHAPEPIVH). The stretch at 608–621 (REEEHVPEPESIVR) is one 11; approximate repeat. The stretch at 622–633 (KGEEHAPEPIVH) is one 12; approximate repeat. A 14; approximate repeat occupies 634–647 (REEEQVPEPESIVH). The stretch at 648 to 659 (REEEHAPEPIVH) is repeat 15. Residues 660–673 (REEEQVPEPESIVH) form a 16; approximate repeat. Tandem repeats lie at residues 674–685 (REEEHAPEPMVL), 686–696 (REEHAPEPIVR), 697–708 (REEEHAPEPIVH), and 709–720 (REEEHAPEPMVH). Over residues 740–756 (TEPEDSSLEEEIIELDY) the composition is skewed to acidic residues. Ser850 carries the phosphoserine modification. 2 stretches are compositionally biased toward polar residues: residues 861 to 884 (PAMT…AIQS) and 1151 to 1161 (CLTSPSEQTVL). Basic and acidic residues-rich tracts occupy residues 1188–1197 (AETEQNKVEP) and 1230–1242 (EHSE…EESS). A compositionally biased stretch (polar residues) spans 1337–1351 (TSVLPTSQPSVSPES). 2 stretches are compositionally biased toward basic and acidic residues: residues 1441–1460 (LEQR…HSPP) and 1476–1486 (TEVKQESKITR). Positions 1522–1540 (ASSSATTVPVTKLDSNSTK) are enriched in polar residues. 6 stretches are compositionally biased toward basic and acidic residues: residues 1620 to 1631 (NDKHEEITRSPD), 1697 to 1706 (IDSRDRDRSL), 1726 to 1742 (GPAE…ENRK), 1760 to 1770 (IEQKEPKRTLH), 1786 to 1803 (DKPE…ENLE), and 1836 to 1850 (EKPD…DRKP). Positions 1854–1863 (QLESSESTDL) are enriched in polar residues. Composition is skewed to basic and acidic residues over residues 1874-1885 (DTDHTSETRNQE), 1896-1916 (LSQE…EGRK), 1992-2001 (KVSDNEDLET), and 2153-2165 (ARKE…HKET). Polar residues predominate over residues 2181 to 2190 (KSAQSAFTRM). Ser2192 bears the Phosphoserine mark. Composition is skewed to basic and acidic residues over residues 2212 to 2244 (GEDR…DGWE), 2279 to 2299 (RMPE…RLEQ), 2306 to 2318 (KLME…LALD), 2377 to 2419 (VYPE…ETDG), and 2429 to 2448 (ELEK…RRFV). The residue at position 2411 (Ser2411) is a Phosphoserine. Phosphoserine is present on Ser2495. Over residues 2513–2523 (KKQETWSDRPT) the composition is skewed to basic and acidic residues. Residues 2640–2664 (SVDQEESEQMQDKLQYLEEKASFKS) adopt a coiled-coil conformation. 6 disordered regions span residues 2667-2725 (VHDE…QPTV), 2742-2773 (LSPG…SSAE), 2791-2835 (GPEK…GMPL), 2881-2959 (EKNE…EREI), 3027-3047 (LESE…DVNL), and 3111-3174 (PEEP…QKEP). A compositionally biased stretch (basic and acidic residues) spans 2682–2709 (SKLEVPDRKITSLKENKTKETHKTKEEI). Residues 2731 to 3041 (YFEKYTLIDY…SSQGNEAGNA (311 aa)) are required for RYR2 clustering. Over residues 2762–2773 (KTLTSFPESSAE) the composition is skewed to polar residues. Composition is skewed to basic and acidic residues over residues 2791–2804 (GPEK…HAEM) and 2812–2828 (KPDD…DVDS). At Ser2905 the chain carries Phosphoserine. The segment covering 2918–2929 (YILKDDILHDES) has biased composition (basic and acidic residues). The segment covering 3030–3047 (EPSSQGNEAGNASPDVNL) has biased composition (polar residues). Basic and acidic residues predominate over residues 3153 to 3162 (VWDRTEDQSA). Positions 3187–3214 (KSLVSEMDKALDIHKDHEVSALDTAISA) are amphipathic helix H1. The interval 3215 to 3342 (VKVQLGEFLE…ERLLSAMEST (128 aa)) is B-box coiled-coil; BBC. A coiled-coil region spans residues 3244-3323 (FNTIEEKCSK…REAEELDETV (80 aa)). The amphipathic helix H2 stretch occupies residues 3301–3318 (SMDTAKDTLETIVREAEE). Fibronectin type-III domains lie at 3374-3475 (VPQP…TAPS) and 3476-3568 (TPVI…TRGT). Positions 3421-3437 (EINELVEEYRLTVKESC) are amphipathic helix H3. In terms of domain architecture, B30.2/SPRY spans 3550–3735 (NASGTSEQSE…LHLGLEPPDS (186 aa)).

Interacts with PRKAR2A. Interacts with ACTN2, DES and DTNBP1/dysbindin. Interacts with DMD/dystrophin. Interacts with the calcineurin catalytic subunit PPP3CA. Interacts with TTN. Interacts with CAPN3; this interaction, which results in CMYA5 proteolysis, may protect CAPN3 from autolysis. Interacts with FSD2. In cardiac muscles, identified in a complex composed of FSD2, CMYA5 and RYR2. Phosphorylated by PKA. In terms of tissue distribution, expressed in skin as well as in cardiac muscle. Expressed in skeletal muscle (at protein level).

It is found in the nucleus. Its subcellular location is the cytoplasm. The protein localises to the perinuclear region. It localises to the myofibril. The protein resides in the sarcomere. It is found in the m line. Its subcellular location is the sarcoplasmic reticulum. Functionally, may serve as an anchoring protein that mediates the subcellular compartmentation of protein kinase A (PKA) via binding to PRKAR2A. May attenuate calcineurin ability to induce slow-fiber gene program in muscle and may negatively modulate skeletal muscle regeneration. Plays a role in the assembly of ryanodine receptor (RYR2) clusters in striated muscle. This chain is Cardiomyopathy-associated protein 5 (Cmya5), found in Mus musculus (Mouse).